The chain runs to 85 residues: U4-theraphotoxin-Hhn1c (85 aa).

The first 22 residues, 1–22 (MKVTLIAILTCAAVLVLHTTAA), serve as a signal peptide directing secretion. Residues 23–48 (EELEAESQLMEVGMPDTELAAVDEER) constitute a propeptide that is removed on maturation. 3 disulfide bridges follow: C52–C66, C56–C77, and C71–C82.

Belongs to the neurotoxin 12 (Hwtx-2) family. 02 (Hwtx-2) subfamily. Expressed by the venom gland.

It localises to the secreted. In terms of biological role, postsynaptic neurotoxin. In Cyriopagopus hainanus (Chinese bird spider), this protein is U4-theraphotoxin-Hhn1c.